The sequence spans 435 residues: Homogentisate 1,2-dioxygenase (435 aa).

Catalysis depends on His289, which acts as the Proton acceptor. 2 residues coordinate Fe cation: His332 and Glu338. Homogentisate-binding residues include Tyr347 and His368. Residue His368 participates in Fe cation binding.

The protein belongs to the homogentisate dioxygenase family. Hexamer; dimer of trimers. Fe cation serves as cofactor.

The catalysed reaction is homogentisate + O2 = 4-maleylacetoacetate + H(+). It participates in amino-acid degradation; L-phenylalanine degradation; acetoacetate and fumarate from L-phenylalanine: step 4/6. Functionally, involved in the catabolism of homogentisate (2,5-dihydroxyphenylacetate or 2,5-OH-PhAc), a central intermediate in the degradation of phenylalanine and tyrosine. Catalyzes the oxidative ring cleavage of the aromatic ring of homogentisate to yield maleylacetoacetate. The protein is Homogentisate 1,2-dioxygenase of Pseudomonas savastanoi pv. phaseolicola (strain 1448A / Race 6) (Pseudomonas syringae pv. phaseolicola (strain 1448A / Race 6)).